A 147-amino-acid polypeptide reads, in one-letter code: Protein YjdN (147 aa).

The polypeptide is Protein YjdN (yjdN) (Escherichia coli (strain K12)).